Reading from the N-terminus, the 224-residue chain is Glutathione S-transferase U28 (224 aa).

The GST N-terminal domain occupies 6-85 (SKVVVLDFWA…YIDETWTDAA (80 aa)). Residues 16-17 (SP), 42-43 (NK), 56-57 (KV), and 69-70 (ES) each bind glutathione. The GST C-terminal domain maps to 91-217 (DPQSRATARF…EKVYQQVLKL (127 aa)). Thr154 carries the phosphothreonine modification.

Belongs to the GST superfamily. Tau family.

The protein resides in the cytoplasm. The protein localises to the cytosol. The enzyme catalyses RX + glutathione = an S-substituted glutathione + a halide anion + H(+). Its function is as follows. May be involved in the conjugation of reduced glutathione to a wide number of exogenous and endogenous hydrophobic electrophiles and have a detoxification role against certain herbicides. The sequence is that of Glutathione S-transferase U28 (GSTU28) from Arabidopsis thaliana (Mouse-ear cress).